Here is a 310-residue protein sequence, read N- to C-terminus: Phosphoribosylaminoimidazole-succinocarboxamide synthase (310 aa).

This sequence belongs to the SAICAR synthetase family.

It catalyses the reaction 5-amino-1-(5-phospho-D-ribosyl)imidazole-4-carboxylate + L-aspartate + ATP = (2S)-2-[5-amino-1-(5-phospho-beta-D-ribosyl)imidazole-4-carboxamido]succinate + ADP + phosphate + 2 H(+). The protein operates within purine metabolism; IMP biosynthesis via de novo pathway; 5-amino-1-(5-phospho-D-ribosyl)imidazole-4-carboxamide from 5-amino-1-(5-phospho-D-ribosyl)imidazole-4-carboxylate: step 1/2. The protein is Phosphoribosylaminoimidazole-succinocarboxamide synthase of Xanthomonas axonopodis pv. citri (strain 306).